A 105-amino-acid polypeptide reads, in one-letter code: Met repressor (105 aa).

This sequence belongs to the MetJ family. Homodimer.

The protein localises to the cytoplasm. Its function is as follows. This regulatory protein, when combined with SAM (S-adenosylmethionine) represses the expression of the methionine regulon and of enzymes involved in SAM synthesis. The protein is Met repressor of Photorhabdus laumondii subsp. laumondii (strain DSM 15139 / CIP 105565 / TT01) (Photorhabdus luminescens subsp. laumondii).